Here is a 79-residue protein sequence, read N- to C-terminus: MQRCDPIRTRPIPPSRHTFIELQGYTDNCHLRAEKVCVPRRSMFVAKQSVTTDWAKVCASKVFFPCNAFRWSTTTALYQ.

It is found in the mitochondrion. This is an uncharacterized protein from Oenothera berteroana (Bertero's evening primrose).